We begin with the raw amino-acid sequence, 365 residues long: Methylthioribose-1-phosphate isomerase (365 aa).

Residues R53 to A55, R90, and Q201 each bind substrate. Residue D242 is the Proton donor of the active site. N252–K253 is a substrate binding site.

The protein belongs to the eIF-2B alpha/beta/delta subunits family. MtnA subfamily.

The enzyme catalyses 5-(methylsulfanyl)-alpha-D-ribose 1-phosphate = 5-(methylsulfanyl)-D-ribulose 1-phosphate. The protein operates within amino-acid biosynthesis; L-methionine biosynthesis via salvage pathway; L-methionine from S-methyl-5-thio-alpha-D-ribose 1-phosphate: step 1/6. Catalyzes the interconversion of methylthioribose-1-phosphate (MTR-1-P) into methylthioribulose-1-phosphate (MTRu-1-P). The polypeptide is Methylthioribose-1-phosphate isomerase (Methylorubrum populi (strain ATCC BAA-705 / NCIMB 13946 / BJ001) (Methylobacterium populi)).